The following is a 326-amino-acid chain: Ribosomal large subunit pseudouridine synthase D (326 aa).

Residue aspartate 144 is part of the active site.

It belongs to the pseudouridine synthase RluA family.

It is found in the cytoplasm. The enzyme catalyses uridine(1911/1915/1917) in 23S rRNA = pseudouridine(1911/1915/1917) in 23S rRNA. Functionally, responsible for synthesis of pseudouridine from uracil at positions 1911, 1915 and 1917 in 23S ribosomal RNA. This Borreliella burgdorferi (strain ATCC 35210 / DSM 4680 / CIP 102532 / B31) (Borrelia burgdorferi) protein is Ribosomal large subunit pseudouridine synthase D.